Here is a 307-residue protein sequence, read N- to C-terminus: Small ribosomal subunit protein uS3 (307 aa).

In terms of domain architecture, KH type-2 spans 17-86 (MDEYFAEQLN…NPQIDAQEVK (70 aa)). Over residues 201–226 (IEEPAEKPAEKQVEKPAVAPKKEAAK) the composition is skewed to basic and acidic residues. Residues 201–265 (IEEPAEKPAE…QVEASEDFEE (65 aa)) are disordered. Over residues 240-265 (PTEEPEVAEPEEAEEAQVEASEDFEE) the composition is skewed to acidic residues.

Belongs to the universal ribosomal protein uS3 family. Part of the 30S ribosomal subunit.

In terms of biological role, binds the lower part of the 30S subunit head. In Methanosarcina mazei (strain ATCC BAA-159 / DSM 3647 / Goe1 / Go1 / JCM 11833 / OCM 88) (Methanosarcina frisia), this protein is Small ribosomal subunit protein uS3.